The chain runs to 463 residues: Putative sodium-coupled neutral amino acid transporter 11 (463 aa).

The disordered stretch occupies residues 1–27 (MGYPGQRPVIPPQSHRDDRETLVSEHK). The segment covering 14–25 (SHRDDRETLVSE) has biased composition (basic and acidic residues). A run of 11 helical transmembrane segments spans residues 38–58 (AVFN…PYSM), 65–85 (LGIL…ILLI), 105–125 (GFPG…IAMI), 150–170 (LLIG…LPLS), 178–198 (LGKI…IVVA), 225–245 (VGVM…YGSL), 256–276 (IIHV…TCGY), 298–320 (VTFG…CFVT), 336–356 (VCHI…SLLI), 358–378 (CLGI…IFII), and 397–417 (IMSC…FVMA). N-linked (GlcNAc...) asparagine glycans are attached at residues asparagine 437, asparagine 442, and asparagine 458.

It belongs to the amino acid/polyamine transporter 2 family.

The protein localises to the membrane. Functionally, putative sodium-dependent amino acid/proton antiporter. In Bos taurus (Bovine), this protein is Putative sodium-coupled neutral amino acid transporter 11 (SLC38A11).